A 443-amino-acid polypeptide reads, in one-letter code: Xaa-Pro dipeptidase (443 aa).

The Mn(2+) site is built by D246, D257, H339, E384, and E423.

Belongs to the peptidase M24B family. Bacterial-type prolidase subfamily. Mn(2+) serves as cofactor.

It carries out the reaction Xaa-L-Pro dipeptide + H2O = an L-alpha-amino acid + L-proline. Splits dipeptides with a prolyl residue in the C-terminal position. This Salmonella arizonae (strain ATCC BAA-731 / CDC346-86 / RSK2980) protein is Xaa-Pro dipeptidase.